A 2097-amino-acid polypeptide reads, in one-letter code: SCAR-like protein 1 (2097 aa).

7 disordered regions span residues 205-227 (IANSESHTTSKDRSSRKVPPRTT), 544-565 (AHSSDKQSSQKSSGLDGSSIES), 1443-1467 (SQIASCSPTPSNEKIDELNAPPLSS), 1588-1616 (STEETYRLSSPVPPPNEPFSNVSYEDPQK), 1730-1802 (QERV…EKTV), 1820-1842 (ASSHVSENGCNQQSHGESLPVTS), and 1893-1944 (YEGP…EGGY). Residues 549-562 (KQSSQKSSGLDGSS) are compositionally biased toward low complexity. Residues 1443-1454 (SQIASCSPTPSN) show a composition bias toward polar residues. The span at 1766 to 1794 (SISQQGLQGSVFPSDTSDNGEHSSYTSRA) shows a compositional bias: polar residues. Residues 1908 to 1922 (YPHDDHNSEKEDIHQ) are compositionally biased toward basic and acidic residues. The 19-residue stretch at 2028 to 2046 (ERNLLLEQIRNKTFNLKPV) folds into the WH2 domain.

This sequence belongs to the SCAR/WAVE family.

It localises to the cytoplasm. The protein localises to the cytoskeleton. In terms of biological role, involved in regulation of actin and microtubule organization. Part of a WAVE complex that activates the Arp2/3 complex. The polypeptide is SCAR-like protein 1 (Oryza sativa subsp. japonica (Rice)).